Consider the following 328-residue polypeptide: D-cysteine desulfhydrase (328 aa).

Position 51 is an N6-(pyridoxal phosphate)lysine (Lys-51).

The protein belongs to the ACC deaminase/D-cysteine desulfhydrase family. As to quaternary structure, homodimer. Requires pyridoxal 5'-phosphate as cofactor.

The catalysed reaction is D-cysteine + H2O = hydrogen sulfide + pyruvate + NH4(+) + H(+). In terms of biological role, catalyzes the alpha,beta-elimination reaction of D-cysteine and of several D-cysteine derivatives. It could be a defense mechanism against D-cysteine. This is D-cysteine desulfhydrase from Salmonella agona (strain SL483).